We begin with the raw amino-acid sequence, 502 residues long: ATP synthase subunit alpha (502 aa).

An ATP-binding site is contributed by 169–176 (GDRQTGKT).

The protein belongs to the ATPase alpha/beta chains family. F-type ATPases have 2 components, CF(1) - the catalytic core - and CF(0) - the membrane proton channel. CF(1) has five subunits: alpha(3), beta(3), gamma(1), delta(1), epsilon(1). CF(0) has three main subunits: a(1), b(2) and c(9-12). The alpha and beta chains form an alternating ring which encloses part of the gamma chain. CF(1) is attached to CF(0) by a central stalk formed by the gamma and epsilon chains, while a peripheral stalk is formed by the delta and b chains.

It is found in the cell inner membrane. It carries out the reaction ATP + H2O + 4 H(+)(in) = ADP + phosphate + 5 H(+)(out). Produces ATP from ADP in the presence of a proton gradient across the membrane. The alpha chain is a regulatory subunit. The sequence is that of ATP synthase subunit alpha from Nitratidesulfovibrio vulgaris (strain DSM 19637 / Miyazaki F) (Desulfovibrio vulgaris).